The chain runs to 89 residues: Signal recognition particle 19 kDa protein (89 aa).

Belongs to the SRP19 family. As to quaternary structure, part of the signal recognition particle protein translocation system, which is composed of SRP and FtsY. Archaeal SRP consists of a 7S RNA molecule of 300 nucleotides and two protein subunits: SRP54 and SRP19.

Its subcellular location is the cytoplasm. Its function is as follows. Involved in targeting and insertion of nascent membrane proteins into the cytoplasmic membrane. Binds directly to 7S RNA and mediates binding of the 54 kDa subunit of the SRP. This is Signal recognition particle 19 kDa protein from Methanobrevibacter smithii (strain ATCC 35061 / DSM 861 / OCM 144 / PS).